We begin with the raw amino-acid sequence, 387 residues long: DNA double-strand break repair protein Mre11 (387 aa).

Residues aspartate 9, histidine 11, aspartate 50, and asparagine 85 each coordinate Mn(2+). Histidine 86 (proton donor) is an active-site residue. Mn(2+) is bound by residues histidine 150, aspartate 181, and histidine 183. Residues 365-387 (AVLDDDADAADDDGRPTTVEEFQ) form a disordered region. The segment covering 366–375 (VLDDDADAAD) has biased composition (acidic residues).

The protein belongs to the MRE11/RAD32 family. Homodimer. Forms a heterotetramer composed of two Mre11 subunits and two Rad50 subunits. Mn(2+) is required as a cofactor.

With respect to regulation, nuclease activity is regulated by Rad50. In terms of biological role, part of the Rad50/Mre11 complex, which is involved in the early steps of DNA double-strand break (DSB) repair. Mre11 binds to DSB ends and has both double-stranded 3'-5' exonuclease activity and single-stranded endonuclease activity. In Halobacterium salinarum (strain ATCC 700922 / JCM 11081 / NRC-1) (Halobacterium halobium), this protein is DNA double-strand break repair protein Mre11.